We begin with the raw amino-acid sequence, 356 residues long: CMP-sialic acid transporter 2 (356 aa).

The span at 1–24 (MEYRRVKDQESYDVVSQKDIESPG) shows a compositional bias: basic and acidic residues. Residues 1 to 43 (MEYRRVKDQESYDVVSQKDIESPGERSLSSTSATSSLSTAGAS) are disordered. At 1-52 (MEYRRVKDQESYDVVSQKDIESPGERSLSSTSATSSLSTAGASKGNNSWKLK) the chain is on the cytoplasmic side. Positions 27–43 (SLSSTSATSSLSTAGAS) are enriched in low complexity. A helical transmembrane segment spans residues 53–73 (SIVTLALTLLTSSQAILIVWS). Topologically, residues 74 to 82 (KRAGKYEYS) are lumenal. Residues 83–103 (VTTANFSVEALKCLLSLIALY) traverse the membrane as a helical segment. The Cytoplasmic portion of the chain corresponds to 104–125 (RTWNSQGVTEDNRLSTSFDEVS). Residues 126–146 (VYPIPAILYMVKNLLQYYIFA) traverse the membrane as a helical segment. Over 147 to 149 (YVD) the chain is Lumenal. Residues 150–172 (APAYQILKNLNIISTGVLYRIIL) traverse the membrane as a helical segment. At 173 to 175 (KKK) the chain is on the cytoplasmic side. A helical membrane pass occupies residues 176–196 (LSEIQWAAFILLCAGCTTAQL). At 197-211 (NPSSDHVLQTPIQGW) the chain is on the lumenal side. A helical membrane pass occupies residues 212-232 (VMAIVMALLSGFAGVYTEAII). Residues 233–239 (KKRPSRN) lie on the Cytoplasmic side of the membrane. The chain crosses the membrane as a helical span at residues 240–260 (INVQNFWLYIFGMLFNLVAIC). At 261-277 (VQDFDAVMNKGFFHGYS) the chain is on the lumenal side. A helical membrane pass occupies residues 278–298 (FITVLMILNHALSGIAVSMVM). Topologically, residues 299–314 (KYADNIVKVYSTSVAM) are cytoplasmic. The chain crosses the membrane as a helical span at residues 315-335 (LLTAVVSVFLFGFHLSLAFFL). Topologically, residues 336-356 (GSTVVSVSVYLHSVGKPQPQK) are lumenal.

The protein belongs to the nucleotide-sugar transporter family. CMP-Sialate:CMP antiporter (TC 2.A.7.12) subfamily.

The protein localises to the golgi apparatus membrane. Sugar transporter involved in the transport of CMP-sialic acid from the cytoplasm into the Golgi. May transport important nucleotide sugars such as CMP-Kdo (2-keto-3-deoxy-D-manno-octulosonic acid) in physiological conditions. This is CMP-sialic acid transporter 2 from Oryza sativa subsp. indica (Rice).